The primary structure comprises 35 residues: MSDINATRLPFVFVASPPCVGDDIAMVLTRGENLC.

A propeptide spanning residues 1 to 10 is cleaved from the precursor; sequence MSDINATRLP. Positions 11-18 form a cross-link, cyclopeptide (Phe-Pro); sequence FVFVASPP. Positions 19–35 are excised as a propeptide; that stretch reads CVGDDIAMVLTRGENLC.

Belongs to the MSDIN fungal toxin family. Processed by the macrocyclase-peptidase enzyme POPB to yield a toxic cyclic octapeptide. POPB first removes 10 residues from the N-terminus. Conformational trapping of the remaining peptide forces the enzyme to release this intermediate rather than proceed to macrocyclization. The enzyme rebinds the remaining peptide in a different conformation and catalyzes macrocyclization of the N-terminal 8 residues. Expressed in basidiocarps.

In terms of biological role, probable toxin that belongs to the MSDIN-like toxin family responsible for a large number of food poisoning cases and deaths. This Amanita exitialis (Guangzhou destroying angel) protein is MSDIN-like toxin proprotein 8.